We begin with the raw amino-acid sequence, 429 residues long: Protein FAM98B (429 aa).

A disordered region spans residues 304 to 429 (RVPDRGGRPN…GGGGGGYRRY (126 aa)). Positions 305–314 (VPDRGGRPNE) are enriched in basic and acidic residues. Positions 332-429 (GGRGGWGGGG…GGGGGGYRRY (98 aa)) are enriched in gly residues.

It belongs to the FAM98 family. In terms of assembly, homodimer. Component of a tRNA-splicing ligase complex. Interacts with FAM98A.

It localises to the nucleus. The protein resides in the cytoplasm. In terms of biological role, positively stimulates PRMT1-induced protein arginine dimethylated arginine methylation. This chain is Protein FAM98B (Fam98b), found in Mus musculus (Mouse).